Reading from the N-terminus, the 894-residue chain is Translation initiation factor IF-2 (894 aa).

The tract at residues 25-304 (ADAGMNKASS…KPTSMQHGFD (280 aa)) is disordered. Basic and acidic residues-rich tracts occupy residues 33 to 44 (SSDHVSDEEKQK), 52 to 62 (EHGDKSGESEP), 101 to 174 (STIE…KEMN), 184 to 239 (AKKE…ENSD), and 247 to 263 (YARE…EGGA). The span at 283–293 (RGGKGRNKGKL) shows a compositional bias: basic residues. One can recognise a tr-type G domain in the interval 393–562 (PRAPVVTIMG…LLQSEVLELT (170 aa)). Positions 402–409 (GHVDHGKT) are G1. A GTP-binding site is contributed by 402 to 409 (GHVDHGKT). Positions 427 to 431 (GITQH) are G2. Residues 448 to 451 (DTPG) are G3. Residues 448–452 (DTPGH) and 502–505 (NKID) contribute to the GTP site. The interval 502-505 (NKID) is G4. A G5 region spans residues 538–540 (SAK).

The protein belongs to the TRAFAC class translation factor GTPase superfamily. Classic translation factor GTPase family. IF-2 subfamily.

The protein localises to the cytoplasm. In terms of biological role, one of the essential components for the initiation of protein synthesis. Protects formylmethionyl-tRNA from spontaneous hydrolysis and promotes its binding to the 30S ribosomal subunits. Also involved in the hydrolysis of GTP during the formation of the 70S ribosomal complex. This is Translation initiation factor IF-2 from Vibrio campbellii (strain ATCC BAA-1116).